A 368-amino-acid polypeptide reads, in one-letter code: Seipin-1 (368 aa).

The next 3 membrane-spanning stretches (helical) occupy residues 26–46, 101–121, and 292–312; these read WFMV…VVLS, VMVL…SLYV, and LCVW…LWCF. Residues 344–368 are disordered; sequence MERRRRERRNQPRRRNFATTQKSYT. Residues 346–359 show a composition bias toward basic residues; that stretch reads RRRRERRNQPRRRN.

It belongs to the seipin family. Expressed in seeds and young seedlings. Not detected in leaves.

The protein localises to the endoplasmic reticulum membrane. Its function is as follows. Involved in lipid metabolism and lipid droplet (LD) morphology, number, and size. Facilitates the formation of large-sized LDs and modulates triacylglycerol accumulation. Induces probably a reorganization of the endoplasmic reticulum into LD-forming domains. In Arabidopsis thaliana (Mouse-ear cress), this protein is Seipin-1.